We begin with the raw amino-acid sequence, 676 residues long: ATP-dependent zinc metalloprotease FtsH (676 aa).

At 1-12 the chain is on the cytoplasmic side; the sequence is MSFFDKIFKKFH. The helical transmembrane segment at 13–33 threads the bilayer; the sequence is MGVLYFAVILIGATFIYCYFT. Residues 34–115 are Extracellular-facing; that stretch reads KHEKKDNNTF…DPRPWNGYEH (82 aa). A helical membrane pass occupies residues 116–136; that stretch reads VFWVFRQCLTMLFFYCFFLFF. Topologically, residues 137–676 are cytoplasmic; the sequence is ADTIKQMGQE…EVLSTDSEQT (540 aa). 212 to 219 contacts ATP; sequence GPPGTGKT. Residue His-433 coordinates Zn(2+). Residue Glu-434 is part of the active site. 2 residues coordinate Zn(2+): His-437 and Asp-509. The interval 610–676 is disordered; it reads EKEETNAPTQ…EVLSTDSEQT (67 aa). Over residues 615 to 636 the composition is skewed to polar residues; the sequence is NAPTQTTSQMSSNNETTNTDKT. A compositionally biased stretch (low complexity) spans 650-667; it reads NQESNESNPNNNEKASPE.

This sequence in the central section; belongs to the AAA ATPase family. In the C-terminal section; belongs to the peptidase M41 family. As to quaternary structure, homohexamer. The cofactor is Zn(2+).

The protein resides in the cell membrane. Functionally, acts as a processive, ATP-dependent zinc metallopeptidase for both cytoplasmic and membrane proteins. Plays a role in the quality control of integral membrane proteins. The protein is ATP-dependent zinc metalloprotease FtsH of Aster yellows witches'-broom phytoplasma (strain AYWB).